The chain runs to 164 residues: UBA-like domain-containing protein 2 (164 aa).

Ser-2 is subject to N-acetylserine. A disordered region spans residues 128–164 (SSPTTFHHLHRPQPTWPPGAQQGGAQQKAMAAMDGQR). Residues 146-164 (GAQQGGAQQKAMAAMDGQR) are compositionally biased toward low complexity.

Belongs to the UBALD family.

The chain is UBA-like domain-containing protein 2 (UBALD2) from Homo sapiens (Human).